An 83-amino-acid polypeptide reads, in one-letter code: Bowman-Birk type seed trypsin and chymotrypsin inhibitor (83 aa).

Intrachain disulfides connect Cys-18-Cys-72, Cys-19-Cys-34, Cys-22-Cys-68, Cys-24-Cys-32, Cys-42-Cys-49, Cys-46-Cys-61, and Cys-51-Cys-59.

Belongs to the Bowman-Birk serine protease inhibitor family.

This Vigna unguiculata (Cowpea) protein is Bowman-Birk type seed trypsin and chymotrypsin inhibitor.